A 127-amino-acid polypeptide reads, in one-letter code: F420-non-reducing hydrogenase subunit G (127 aa).

This sequence belongs to the [NiFe]/[NiFeSe] hydrogenase small subunit family. The F420-non-reducing hydrogenase is composed of three subunits; MvhA, MvhD and MvhG. It forms a complex with the heterodisulfide reductase (hdr).

Its function is as follows. Part of a complex that provides reducing equivalents for heterodisulfide reductase. The sequence is that of F420-non-reducing hydrogenase subunit G (mvhG) from Methanothermus fervidus.